The chain runs to 342 residues: GTPase Obg (342 aa).

The Obg domain maps to 1 to 159 (MKFLDEAKVY…MWIWLRLKLI (159 aa)). Residues 160–327 (ADAGLVGLPN…ALRALQTEID (168 aa)) enclose the OBG-type G domain. Residues 166–173 (GLPNAGKS), 191–195 (FTTLH), 212–215 (DIPG), 279–282 (SKAD), and 308–310 (SSA) contribute to the GTP site. Residues Ser173 and Thr193 each coordinate Mg(2+).

The protein belongs to the TRAFAC class OBG-HflX-like GTPase superfamily. OBG GTPase family. In terms of assembly, monomer. It depends on Mg(2+) as a cofactor.

Its subcellular location is the cytoplasm. In terms of biological role, an essential GTPase which binds GTP, GDP and possibly (p)ppGpp with moderate affinity, with high nucleotide exchange rates and a fairly low GTP hydrolysis rate. Plays a role in control of the cell cycle, stress response, ribosome biogenesis and in those bacteria that undergo differentiation, in morphogenesis control. In Methylobacterium radiotolerans (strain ATCC 27329 / DSM 1819 / JCM 2831 / NBRC 15690 / NCIMB 10815 / 0-1), this protein is GTPase Obg.